Here is a 243-residue protein sequence, read N- to C-terminus: uncharacterized protein (243 aa).

Positions Met1–Ala19 are cleaved as a signal peptide. The N-linked (GlcNAc...) asparagine glycan is linked to Asn136.

It localises to the secreted. This is an uncharacterized protein from Homo sapiens (Human).